A 396-amino-acid polypeptide reads, in one-letter code: Gap junction gamma-1 protein (396 aa).

Residues 1–18 (MSWSFLTRLLEEIHNHST) are Cytoplasmic-facing. The chain crosses the membrane as a helical span at residues 19–39 (FVGKIWLTVLIVFRIVLTAVG). Over 40-75 (GESIYYDEQSKFVCNTEQPGCENVCYDAFAPLSHVR) the chain is Extracellular. The chain crosses the membrane as a helical span at residues 76 to 96 (FWVFQIILVATPSVMYLGYAI). The Cytoplasmic portion of the chain corresponds to 97–175 (HKIAKMEHGE…RRIREDGLMK (79 aa)). A disordered region spans residues 145-165 (ELESEKENKEQSQPKPKHDGR). Residues 147 to 156 (ESEKENKEQS) are compositionally biased toward basic and acidic residues. Residues 176 to 198 (IYVLQLLARTVFEVGFLIGQYFL) form a helical membrane-spanning segment. Over 199–229 (YGFQVHPFYVCSRLPCPHKIDCFISRPTEKT) the chain is Extracellular. A helical transmembrane segment spans residues 230-250 (IFLLIMYGVTGLCLLLNIWEM). Over 251–396 (LHLGFGTIRD…SGDGKTSVWI (146 aa)) the chain is Cytoplasmic. The stretch at 303-358 (ELSNAKIAYKQNKANIAQEQQYGSHEEHLPADLETLQREIRMAQERLDLAIQAYHH) forms a coiled coil. A disordered region spans residues 357 to 396 (HHQNNPHGPREKKAKVGSKSGSNKSSISSKSGDGKTSVWI). Residues 373–396 (GSKSGSNKSSISSKSGDGKTSVWI) show a composition bias toward low complexity.

This sequence belongs to the connexin family. Gamma-type subfamily. A connexon is composed of a hexamer of connexins. Interacts with CNST.

The protein resides in the cell membrane. Its subcellular location is the cell junction. It is found in the gap junction. One gap junction consists of a cluster of closely packed pairs of transmembrane channels, the connexons, through which materials of low MW diffuse from one cell to a neighboring cell. The sequence is that of Gap junction gamma-1 protein (GJC1) from Cricetulus griseus (Chinese hamster).